Here is a 62-residue protein sequence, read N- to C-terminus: DNA-directed RNA polymerase subunit Rpo10 (62 aa).

4 residues coordinate Zn(2+): Cys6, Cys9, Cys43, and Cys44.

This sequence belongs to the archaeal Rpo10/eukaryotic RPB10 RNA polymerase subunit family. Part of the RNA polymerase complex. The cofactor is Zn(2+).

Its subcellular location is the cytoplasm. The catalysed reaction is RNA(n) + a ribonucleoside 5'-triphosphate = RNA(n+1) + diphosphate. In terms of biological role, DNA-dependent RNA polymerase (RNAP) catalyzes the transcription of DNA into RNA using the four ribonucleoside triphosphates as substrates. This is DNA-directed RNA polymerase subunit Rpo10 from Methanospirillum hungatei JF-1 (strain ATCC 27890 / DSM 864 / NBRC 100397 / JF-1).